The chain runs to 800 residues: Phenylalanine--tRNA ligase beta subunit (800 aa).

Residues 39–154 (TKDIKNLVVG…ESQVPGTDAL (116 aa)) enclose the tRNA-binding domain. The B5 domain maps to 408 to 483 (AFITPIDITA…RIYGYDDIPS (76 aa)). Residues Asp-461, Asp-467, Glu-470, and Glu-471 each contribute to the Mg(2+) site. The FDX-ACB domain occupies 708–800 (PRFPGMSRDI…ALIEQGAVIR (93 aa)).

This sequence belongs to the phenylalanyl-tRNA synthetase beta subunit family. Type 1 subfamily. Tetramer of two alpha and two beta subunits. Requires Mg(2+) as cofactor.

Its subcellular location is the cytoplasm. It catalyses the reaction tRNA(Phe) + L-phenylalanine + ATP = L-phenylalanyl-tRNA(Phe) + AMP + diphosphate + H(+). In Staphylococcus aureus (strain MSSA476), this protein is Phenylalanine--tRNA ligase beta subunit.